The following is a 279-amino-acid chain: MKVISSIQELRDQLRGQNRTAFVPTMGNLHEGHLSLMRLARQHGDPVVASIFVNRLQFGPNEDFDKYPRTLQDDIEKLQKENVYVLFAPTERDMYPEPQEYRVLPPDDLGGILEGEFRPGFFAGVCTVVTKLMSCVQPRVAVFGKKDYQQLMIVRRMCQQLALPVDIIAAETVRDEDGLALSSRNRYLTTDERKEAPELAKTLQRVRDGVLGGERDLGKLEQTARTHLAERGWAPDYISIRRRANLIAPSAAELEAGEPLVVLAAAKLGATRLIDNLEI.

26 to 33 lines the ATP pocket; the sequence is MGNLHEGH. Histidine 33 acts as the Proton donor in catalysis. Glutamine 57 contributes to the (R)-pantoate binding site. Position 57 (glutamine 57) interacts with beta-alanine. 144 to 147 provides a ligand contact to ATP; that stretch reads GKKD. Glutamine 150 is a binding site for (R)-pantoate. ATP-binding positions include valine 173 and 181–184; that span reads LSSR.

The protein belongs to the pantothenate synthetase family. As to quaternary structure, homodimer.

The protein resides in the cytoplasm. The catalysed reaction is (R)-pantoate + beta-alanine + ATP = (R)-pantothenate + AMP + diphosphate + H(+). It functions in the pathway cofactor biosynthesis; (R)-pantothenate biosynthesis; (R)-pantothenate from (R)-pantoate and beta-alanine: step 1/1. Catalyzes the condensation of pantoate with beta-alanine in an ATP-dependent reaction via a pantoyl-adenylate intermediate. This chain is Pantothenate synthetase, found in Burkholderia ambifaria (strain MC40-6).